The primary structure comprises 113 residues: MEAKAVARYIRISPRKVRQVVDLIRGKKLNEALAILRYTPKRASAVVAKVVRSAAANAENNLQMDRDELFIKACYVDQGPTYKRYMPRAFGRADVMRKRTSHITVVVSDKKEG.

Belongs to the universal ribosomal protein uL22 family. Part of the 50S ribosomal subunit.

This protein binds specifically to 23S rRNA; its binding is stimulated by other ribosomal proteins, e.g. L4, L17, and L20. It is important during the early stages of 50S assembly. It makes multiple contacts with different domains of the 23S rRNA in the assembled 50S subunit and ribosome. Its function is as follows. The globular domain of the protein is located near the polypeptide exit tunnel on the outside of the subunit, while an extended beta-hairpin is found that lines the wall of the exit tunnel in the center of the 70S ribosome. The sequence is that of Large ribosomal subunit protein uL22 from Pelotomaculum thermopropionicum (strain DSM 13744 / JCM 10971 / SI).